We begin with the raw amino-acid sequence, 412 residues long: Maintenance of mitochondrial morphology protein 1 (412 aa).

Topologically, residues M1–G19 are lumenal. A helical membrane pass occupies residues L20 to F40. The Cytoplasmic segment spans residues G41–T412. The 217-residue stretch at Q121–P337 folds into the SMP-LTD domain. A compositionally biased stretch (basic and acidic residues) spans A372–R384. The segment at A372 to T412 is disordered.

Belongs to the MMM1 family. In terms of assembly, homodimer. Component of the ER-mitochondria encounter structure (ERMES) or MDM complex, composed of MMM1, MDM10, MDM12 and MDM34. An MMM1 homodimer associates with one molecule of MDM12 on each side in a pairwise head-to-tail manner, and the SMP-LTD domains of MMM1 and MDM12 generate a continuous hydrophobic tunnel for phospholipid trafficking.

It is found in the endoplasmic reticulum membrane. In terms of biological role, component of the ERMES/MDM complex, which serves as a molecular tether to connect the endoplasmic reticulum (ER) and mitochondria. Components of this complex are involved in the control of mitochondrial shape and protein biogenesis, and function in nonvesicular lipid trafficking between the ER and mitochondria. The MDM12-MMM1 subcomplex functions in the major beta-barrel assembly pathway that is responsible for biogenesis of all outer membrane beta-barrel proteins, and acts in a late step after the SAM complex. The MDM10-MDM12-MMM1 subcomplex further acts in the TOM40-specific pathway after the action of the MDM12-MMM1 complex. Essential for establishing and maintaining the structure of mitochondria and maintenance of mtDNA nucleoids. The sequence is that of Maintenance of mitochondrial morphology protein 1 from Podospora anserina (strain S / ATCC MYA-4624 / DSM 980 / FGSC 10383) (Pleurage anserina).